We begin with the raw amino-acid sequence, 164 residues long: uncharacterized protein (164 aa).

The tract at residues 144-164 (GFISPEKEHESEDMTSQSLVA) is disordered.

This is an uncharacterized protein from Synechocystis sp. (strain ATCC 27184 / PCC 6803 / Kazusa).